Reading from the N-terminus, the 312-residue chain is DNA-directed RNA polymerase subunit alpha (312 aa).

The segment at 1-226 (MIEFEKPKIT…DHLNLFVDLS (226 aa)) is alpha N-terminal domain (alpha-NTD). Positions 243–312 (TERVLDKIIE…ELGLSLKKRK (70 aa)) are alpha C-terminal domain (alpha-CTD).

It belongs to the RNA polymerase alpha chain family. In terms of assembly, homodimer. The RNAP catalytic core consists of 2 alpha, 1 beta, 1 beta' and 1 omega subunit. When a sigma factor is associated with the core the holoenzyme is formed, which can initiate transcription.

It catalyses the reaction RNA(n) + a ribonucleoside 5'-triphosphate = RNA(n+1) + diphosphate. Functionally, DNA-dependent RNA polymerase catalyzes the transcription of DNA into RNA using the four ribonucleoside triphosphates as substrates. The polypeptide is DNA-directed RNA polymerase subunit alpha (Lactococcus lactis subsp. cremoris (strain SK11)).